The chain runs to 369 residues: Phosphoribosyl pyrophosphate synthase-associated protein 2 (369 aa).

Methionine 1 is modified (N-acetylmethionine). Phosphoserine is present on residues serine 219, serine 227, and serine 233.

Belongs to the ribose-phosphate pyrophosphokinase family. As to quaternary structure, binds to PRPS1 and PRPS2.

In terms of biological role, seems to play a negative regulatory role in 5-phosphoribose 1-diphosphate synthesis. The polypeptide is Phosphoribosyl pyrophosphate synthase-associated protein 2 (PRPSAP2) (Bos taurus (Bovine)).